Here is a 315-residue protein sequence, read N- to C-terminus: MIDLCILGTTGGMPMVNKYLSATLININGRKILIDCGEGTQVAMREIGWGFKSIDLICITHSHGDHTIGLPGLLSTMGNSGRTEKVIIVGPKGIKEIVNGLNIINPYLPYELEVVELENNDLKFIIDKNNMFLCEDNDKCNLILSSLEVEHSAKCLSYSFYIKRRPRFSVEKASKNNVPKLLWSKLQNQEIVNYDNKIYTPDLVLDNARKGIKISYVTDTRPISTLPQFIKYSDLFICEGTYGSDEDIDKAIKNKHMTFRESATLAKKGECNELILTHFSAALSAPENFLNNAKEIFHNSIVAHDGLIKTLKFID.

Zn(2+) contacts are provided by His-61, His-63, Asp-65, His-66, His-151, Asp-219, and His-278. Catalysis depends on Asp-65, which acts as the Proton acceptor.

It belongs to the RNase Z family. In terms of assembly, homodimer. The cofactor is Zn(2+).

The catalysed reaction is Endonucleolytic cleavage of RNA, removing extra 3' nucleotides from tRNA precursor, generating 3' termini of tRNAs. A 3'-hydroxy group is left at the tRNA terminus and a 5'-phosphoryl group is left at the trailer molecule.. Functionally, zinc phosphodiesterase, which displays some tRNA 3'-processing endonuclease activity. Probably involved in tRNA maturation, by removing a 3'-trailer from precursor tRNA. This Clostridium botulinum (strain Alaska E43 / Type E3) protein is Ribonuclease Z.